Reading from the N-terminus, the 309-residue chain is Carbamate kinase-like protein (309 aa).

Positions 125-144 are disordered; it reads NKPVGPFYNTEETARSANPN.

It belongs to the carbamate kinase family.

This Mycoplasma pneumoniae (strain ATCC 29342 / M129 / Subtype 1) (Mycoplasmoides pneumoniae) protein is Carbamate kinase-like protein.